A 717-amino-acid polypeptide reads, in one-letter code: Delta-like protein D (717 aa).

Residues 1–19 (MGRLMIAVLLCVMISQGFC) form the signal peptide. Over 20-547 (SGVFELKLQE…EEDDGGFPWT (528 aa)) the chain is Extracellular. The 45-residue stretch at 175–219 (FVCDEHYYGEGCSVFCRPRDDTFGHFTCGERGEIICNSGWKGQYC) folds into the DSL domain. Intrachain disulfides connect C177–C186, C190–C202, C210–C219, C224–C235, C228–C241, C243–C252, C261–C266, C274–C283, C290–C302, C296–C312, C314–C323, C330–C341, C335–C350, C352–C361, C368–C379, C373–C389, C391–C400, C407–C418, C412–C427, C429–C438, C445–C456, C450–C465, C467–C476, C483–C494, C488–C503, and C505–C514. EGF-like domains lie at 220-253 (TEPI…KYCD), 257-284 (RYPG…LFCN), and 286-324 (DLNY…DSCE). An EGF-like 4; calcium-binding domain is found at 326 to 362 (EVNECSGSPCRNGGSCTDLENTYSCTCPPGFYGRNCE). EGF-like domains are found at residues 364–401 (SAMT…FNCE) and 403–439 (KIDH…THCE). One can recognise an EGF-like 7; calcium-binding domain in the interval 441-477 (NIDECATYPCQNGGTCQDGLSDYTCTCPPGYTGKNCT). N-linked (GlcNAc...) asparagine glycosylation is present at N475. The EGF-like 8 domain occupies 479-515 (AVNKCLHNPCHNGATCHEMDNRYVCACIPGYGGRNCQ). A helical transmembrane segment spans residues 548–568 (AVCAGIILVLLVLIGGSVFVI). Residues 569 to 717 (YIRLKLQQRS…KDECIIATEV (149 aa)) are Cytoplasmic-facing. The disordered stretch occupies residues 649 to 693 (EDLGKEDSERSEATKCEPLDSDSEEKHRNHLKSDSSERKRTESLC).

Interacts with mib. Ubiquitinated by mib, leading to its endocytosis and subsequent degradation. As to expression, expressed in both mesodermal and neuroectodermal regions. In the developing nervous system, it is expressed in overlapping regions with deltaB (dlb) and deltaA (dla); in the neural plate, dld is expressed in patches of contiguous cells with dla, while dlb is confined to scattered cells within those patches that will differentiate as neurons. In somites, it marks the anterior part of each formed somite, while deltaC (dlc) marks the posterior part. In 24 hours embryos, expressed in the hindbrain in stripes adjacent to rhombomere boundaries, but not in the actual boundary cells.

The protein resides in the membrane. In terms of biological role, acts as a ligand for Notch receptors and is involved in primary neurogenesis and somitogenesis. Can activate Notch receptors, thereby playing a key role in lateral inhibition, a process that prevents the immediate neighbors of each nascent neural cell from simultaneously embarking on neural differentiation. Required in somite segmentation to keep the oscillations of neighboring presomitic mesoderm cells synchronized. The chain is Delta-like protein D (dld) from Danio rerio (Zebrafish).